Reading from the N-terminus, the 168-residue chain is MGIENLVQNDVVLTRLDALFNWGRKNSLWPMIFGTACCAIEFMSAVSSKHDLSRFGAEVMRFSPRQADLMIIAGTISFKQAPILKEIYDQMCEPKWVVSMGACACSGGFYDNYTTLQGIDQIIPVDVYISGCPPRPEAIIDAILAIQDKISNESIKDRHKDYKGLLDA.

Cysteine 37, cysteine 38, cysteine 103, and cysteine 132 together coordinate [4Fe-4S] cluster.

It belongs to the complex I 20 kDa subunit family. NDH-1 is composed of 14 different subunits. Subunits NuoB, C, D, E, F, and G constitute the peripheral sector of the complex. The cofactor is [4Fe-4S] cluster.

The protein localises to the cell inner membrane. It carries out the reaction a quinone + NADH + 5 H(+)(in) = a quinol + NAD(+) + 4 H(+)(out). NDH-1 shuttles electrons from NADH, via FMN and iron-sulfur (Fe-S) centers, to quinones in the respiratory chain. The immediate electron acceptor for the enzyme in this species is believed to be ubiquinone. Couples the redox reaction to proton translocation (for every two electrons transferred, four hydrogen ions are translocated across the cytoplasmic membrane), and thus conserves the redox energy in a proton gradient. This Campylobacter fetus subsp. fetus (strain 82-40) protein is NADH-quinone oxidoreductase subunit B.